The following is a 686-amino-acid chain: Methionine--tRNA ligase (686 aa).

The 'HIGH' region motif lies at 15–25 (PYANGSIHLGH). The Zn(2+) site is built by cysteine 146, cysteine 149, cysteine 159, and cysteine 162. Residues 332–336 (KMSKS) carry the 'KMSKS' region motif. Lysine 335 serves as a coordination point for ATP. The tRNA-binding domain occupies 585–686 (AFEAVDMRIA…EGAQPGMRVM (102 aa)).

Belongs to the class-I aminoacyl-tRNA synthetase family. MetG type 1 subfamily. Homodimer. Zn(2+) is required as a cofactor.

The protein localises to the cytoplasm. The enzyme catalyses tRNA(Met) + L-methionine + ATP = L-methionyl-tRNA(Met) + AMP + diphosphate. Its function is as follows. Is required not only for elongation of protein synthesis but also for the initiation of all mRNA translation through initiator tRNA(fMet) aminoacylation. The protein is Methionine--tRNA ligase of Aliivibrio salmonicida (strain LFI1238) (Vibrio salmonicida (strain LFI1238)).